The following is a 205-amino-acid chain: Imidazole glycerol phosphate synthase subunit HisH (205 aa).

Residues 3–205 (KIGLIDYGMG…LLRRWLSNIQ (203 aa)) enclose the Glutamine amidotransferase type-1 domain. The active-site Nucleophile is the Cys-81. Active-site residues include His-185 and Glu-187.

In terms of assembly, heterodimer of HisH and HisF.

It localises to the cytoplasm. The catalysed reaction is 5-[(5-phospho-1-deoxy-D-ribulos-1-ylimino)methylamino]-1-(5-phospho-beta-D-ribosyl)imidazole-4-carboxamide + L-glutamine = D-erythro-1-(imidazol-4-yl)glycerol 3-phosphate + 5-amino-1-(5-phospho-beta-D-ribosyl)imidazole-4-carboxamide + L-glutamate + H(+). The enzyme catalyses L-glutamine + H2O = L-glutamate + NH4(+). Its pathway is amino-acid biosynthesis; L-histidine biosynthesis; L-histidine from 5-phospho-alpha-D-ribose 1-diphosphate: step 5/9. IGPS catalyzes the conversion of PRFAR and glutamine to IGP, AICAR and glutamate. The HisH subunit catalyzes the hydrolysis of glutamine to glutamate and ammonia as part of the synthesis of IGP and AICAR. The resulting ammonia molecule is channeled to the active site of HisF. This chain is Imidazole glycerol phosphate synthase subunit HisH, found in Prochlorococcus marinus (strain MIT 9312).